Reading from the N-terminus, the 316-residue chain is Acetyl-coenzyme A carboxylase carboxyl transferase subunit alpha (316 aa).

One can recognise a CoA carboxyltransferase C-terminal domain in the interval 39-293 (KLEEKNAQLT…KKHLQANLTN (255 aa)).

It belongs to the AccA family. As to quaternary structure, acetyl-CoA carboxylase is a heterohexamer composed of biotin carboxyl carrier protein (AccB), biotin carboxylase (AccC) and two subunits each of ACCase subunit alpha (AccA) and ACCase subunit beta (AccD).

It localises to the cytoplasm. The catalysed reaction is N(6)-carboxybiotinyl-L-lysyl-[protein] + acetyl-CoA = N(6)-biotinyl-L-lysyl-[protein] + malonyl-CoA. Its pathway is lipid metabolism; malonyl-CoA biosynthesis; malonyl-CoA from acetyl-CoA: step 1/1. Functionally, component of the acetyl coenzyme A carboxylase (ACC) complex. First, biotin carboxylase catalyzes the carboxylation of biotin on its carrier protein (BCCP) and then the CO(2) group is transferred by the carboxyltransferase to acetyl-CoA to form malonyl-CoA. The chain is Acetyl-coenzyme A carboxylase carboxyl transferase subunit alpha from Coxiella burnetii (strain CbuK_Q154) (Coxiella burnetii (strain Q154)).